A 213-amino-acid polypeptide reads, in one-letter code: Orotate phosphoribosyltransferase (213 aa).

K26 contributes to the 5-phospho-alpha-D-ribose 1-diphosphate binding site. Orotate is bound at residue 34–35; sequence FF. Residues 72–73, R99, K100, K103, H105, and 124–132 contribute to the 5-phospho-alpha-D-ribose 1-diphosphate site; these read YK and DDVITAGTA. Orotate-binding residues include T128 and R156.

The protein belongs to the purine/pyrimidine phosphoribosyltransferase family. PyrE subfamily. Homodimer. Requires Mg(2+) as cofactor.

The catalysed reaction is orotidine 5'-phosphate + diphosphate = orotate + 5-phospho-alpha-D-ribose 1-diphosphate. It participates in pyrimidine metabolism; UMP biosynthesis via de novo pathway; UMP from orotate: step 1/2. Its function is as follows. Catalyzes the transfer of a ribosyl phosphate group from 5-phosphoribose 1-diphosphate to orotate, leading to the formation of orotidine monophosphate (OMP). The chain is Orotate phosphoribosyltransferase from Vibrio parahaemolyticus serotype O3:K6 (strain RIMD 2210633).